Consider the following 123-residue polypeptide: ATP synthase epsilon chain (123 aa).

Belongs to the ATPase epsilon chain family. In terms of assembly, F-type ATPases have 2 components, CF(1) - the catalytic core - and CF(0) - the membrane proton channel. CF(1) has five subunits: alpha(3), beta(3), gamma(1), delta(1), epsilon(1). CF(0) has three main subunits: a, b and c.

Its subcellular location is the cell inner membrane. Produces ATP from ADP in the presence of a proton gradient across the membrane. This chain is ATP synthase epsilon chain (atpC), found in Helicobacter pylori (strain ATCC 700392 / 26695) (Campylobacter pylori).